Here is an 885-residue protein sequence, read N- to C-terminus: Phycobiliprotein ApcE (885 aa).

Cys-185 serves as a coordination point for (2R,3E)-phycocyanobilin. PBS-linker domains are found at residues 242-422 (DVQG…FRKV), 498-680 (KSIG…NSKK), and 694-871 (NSIQ…KQSS).

Belongs to the phycobilisome linker protein family. Post-translationally, contains one covalently linked bilin chromophore. This protein autochromophorylates (Potential).

It is found in the plastid. It localises to the chloroplast thylakoid membrane. This protein is postulated to act both as terminal energy acceptor and as a linker polypeptide that stabilizes the phycobilisome architecture. May have intrinsic bilin lyase activity. The protein is Phycobiliprotein ApcE (apcE) of Aglaothamnion neglectum (Red alga).